We begin with the raw amino-acid sequence, 580 residues long: MKHAHLIVPRTLVAGSASGELLYAPTGLSFWGGVDPRSAEVIDRHHPLSGRHLHGRLLAIPGGRGSCTGSSVLLELILGGRAPAAILLREPDEILALGAIVAEELFGRSLPIACLGERFDELAAYPWARLADGRLELHRDAPPPLEARPAEALATDAGPRLDAFDQALLAGEHGEAARLAMRIVLRMAALQGAQRLIDIQRAHIDACIYTGPAGLRFAETLRDLGARVRVPTTLNAISVDQRRWREQGVPAALGEPAAALARAYLDMGAQPSFTCAPYLLDDSARAGEQIVWAESNAVLFANSVLGARTNKYADFMDICCALTGRAPLAGCHLDEQRQARVLIEVEDLGSVDDAFYPTLGYLCGLLCDGQIPAIDGLRQRQPDHDALKAFGAALGTSSSVPMFHVIGVTPEAPDLASAFGGRAPRRTLRVGRERLRDAWRELDSAGETRIDLVALGNPHFSASEFAQLAALCHGRRRHPEVALVITSSRQVVAQAEAAGHLATLQAFGARLVTDTCWCMLDEPLVPPGARTLMTNSAKYAHYAPGLVGRQVRFAGLAGCVEAAVGGRSPAGLPAWLSEDC.

The active-site Proton acceptor is S66.

Belongs to the AcnX family. As to quaternary structure, monomer. Requires Fe(3+) as cofactor.

It carries out the reaction cis-3-hydroxy-L-proline = 1-pyrroline-2-carboxylate + H2O. Its activity is regulated as follows. Inhibited by Zn(2+), Cd(2+) and Hg(2+), but not by Co(2+), Ni(2+), Mn(2+), Sr(2+), Mg(2+), or Fe(3+). Inhibited by pyrrole-2-carboxylate and its derivative 2-thiophenecarboxylate, but not by trans-aconitate, fluorocitrate and oxalomalate, which are typical inhibitors of the aconitase enzymes. Functionally, catalyzes the dehydration of cis-3-hydroxy-L-proline (c3LHyp) to Delta(1)-pyrroline-2-carboxylate (Pyr2C). Also has activity with (2S,3S,4R)-3,4-dihydroxyproline as substrate, albeit at about 300-fold lower rate. No activity with L-proline, trans-4-hydroxy-L-proline (t4LHyp), cis-4-hydroxy-L-proline (c4LHyp), trans-3-hydroxy-L-proline (t3LHyp), D-proline, cis-4-hydroxy-D-proline (c4DHyp), trans-4-hydroxy-D-proline (t4DHyp) or L-serine as substrates. No hydro-lyase activity with citrate or cis-acotinate. Does not catalyze 2-epimerization of c3LHyp to trans-3-hydroxy-D-proline (t3DHyp). Involved in a degradation pathway that converts c3LHyp to L-proline, which would allow P.aeruginosa to grow on c3LHyp as a sole carbon source. The chain is Cis-3-hydroxy-L-proline dehydratase from Pseudomonas aeruginosa (strain ATCC 15692 / DSM 22644 / CIP 104116 / JCM 14847 / LMG 12228 / 1C / PRS 101 / PAO1).